Consider the following 340-residue polypeptide: Solute carrier family 35 member G3 (340 aa).

The tract at residues 11 to 33 (PDFTQPSPPSTPASLPSKHHHRC) is disordered. The next 9 membrane-spanning stretches (helical) occupy residues 39–59 (TKGL…VGPF), 69–89 (LPSL…ALLL), 107–127 (FLHA…VQVV), 160–180 (AWCG…PGLG), 189–209 (LYTA…SLGL), 223–243 (TVAF…LFVL), 257–277 (CVVA…YAVT), 283–303 (LVCA…YYVL), and 307–327 (VAPS…IITA). In terms of domain architecture, EamA 1 spans 51 to 176 (LSAGFVGPFS…STLGLIIIVG (126 aa)). Positions 274–327 (YAVTKAHPALVCAVLHSEVVVALMLQYYVLYETVAPSDIMGAGVVLGSIAIITA) constitute an EamA 2 domain.

This sequence belongs to the SLC35G solute transporter family.

It is found in the membrane. The protein is Solute carrier family 35 member G3 (Slc35g3) of Mus musculus (Mouse).